The primary structure comprises 592 residues: uncharacterized protein (592 aa).

The first 23 residues, 1–23, serve as a signal peptide directing secretion; that stretch reads MRKAPLLRFTLASLALACSQAFA. The active-site Nucleophile is the S37. Residues D294 and H297 contribute to the active site. The 259-residue stretch at 334-592 folds into the Autotransporter domain; it reads HQDELRNQWQ…PDPGEPGGKP (259 aa). Residues 572–592 are disordered; it reads FTLTGYTPHTAPDPGEPGGKP.

The protein belongs to the 'GDSL' lipolytic enzyme family.

This is an uncharacterized protein from Pseudomonas putida (Arthrobacter siderocapsulatus).